The sequence spans 441 residues: uncharacterized protein (441 aa).

78 to 85 (GPRQAGKT) contributes to the ATP binding site.

This is an uncharacterized protein from Mycobacterium bovis (strain ATCC BAA-935 / AF2122/97).